The following is a 118-amino-acid chain: uncharacterized protein (118 aa).

This is an uncharacterized protein from Aquifex aeolicus (strain VF5).